We begin with the raw amino-acid sequence, 476 residues long: Glutamate--tRNA ligase 1 (476 aa).

The 'HIGH' region signature appears at 9–19 (PSPTGFLHIGG). The short motif at 238–242 (KLSKR) is the 'KMSKS' region element. Lys241 serves as a coordination point for ATP.

The protein belongs to the class-I aminoacyl-tRNA synthetase family. Glutamate--tRNA ligase type 1 subfamily. Monomer.

Its subcellular location is the cytoplasm. The enzyme catalyses tRNA(Glu) + L-glutamate + ATP = L-glutamyl-tRNA(Glu) + AMP + diphosphate. In terms of biological role, catalyzes the attachment of glutamate to tRNA(Glu) in a two-step reaction: glutamate is first activated by ATP to form Glu-AMP and then transferred to the acceptor end of tRNA(Glu). The polypeptide is Glutamate--tRNA ligase 1 (Bartonella tribocorum (strain CIP 105476 / IBS 506)).